The primary structure comprises 260 residues: Cytochrome c oxidase subunit 3 (260 aa).

The Mitochondrial matrix segment spans residues 1–15; the sequence is MTHQTHAYHMVNPSP. A helical membrane pass occupies residues 16–34; sequence WPLTGALSALLMTSGLAMW. The Mitochondrial intermembrane segment spans residues 35–40; it reads FHFNST. A helical transmembrane segment spans residues 41–66; the sequence is ALLMIGLTTNMLTMYQWWRDIIREST. Residues 67–72 are Mitochondrial matrix-facing; that stretch reads FQGHHT. The helical transmembrane segment at 73-105 threads the bilayer; the sequence is PAVQKGLRYGMILFIISEVLFFTGFFWAFYHSS. The Mitochondrial intermembrane segment spans residues 106–128; that stretch reads LAPTPELGGCWPPTGIHPLNPLE. The helical transmembrane segment at 129 to 152 threads the bilayer; that stretch reads VPLLNTSVLLASGVSITWAHHSLM. Topologically, residues 153–155 are mitochondrial matrix; it reads EGD. The chain crosses the membrane as a helical span at residues 156-183; sequence RNHMLQALFITITLGVYFTLLQASEYYE. Residues 184 to 190 lie on the Mitochondrial intermembrane side of the membrane; sequence APFTISD. Residues 191-223 form a helical membrane-spanning segment; sequence GVYGSTFFVATGFHGLHVIIGSTFLIVCFFRQL. The Mitochondrial matrix segment spans residues 224-232; that stretch reads KFHFTSNHH. The helical transmembrane segment at 233 to 256 threads the bilayer; that stretch reads FGFEAAAWYWHFVDVVWLFLYVSI. The Mitochondrial intermembrane segment spans residues 257–260; sequence YWWG.

It belongs to the cytochrome c oxidase subunit 3 family. As to quaternary structure, component of the cytochrome c oxidase (complex IV, CIV), a multisubunit enzyme composed of 14 subunits. The complex is composed of a catalytic core of 3 subunits MT-CO1, MT-CO2 and MT-CO3, encoded in the mitochondrial DNA, and 11 supernumerary subunits COX4I, COX5A, COX5B, COX6A, COX6B, COX6C, COX7A, COX7B, COX7C, COX8 and NDUFA4, which are encoded in the nuclear genome. The complex exists as a monomer or a dimer and forms supercomplexes (SCs) in the inner mitochondrial membrane with NADH-ubiquinone oxidoreductase (complex I, CI) and ubiquinol-cytochrome c oxidoreductase (cytochrome b-c1 complex, complex III, CIII), resulting in different assemblies (supercomplex SCI(1)III(2)IV(1) and megacomplex MCI(2)III(2)IV(2)).

The protein resides in the mitochondrion inner membrane. The enzyme catalyses 4 Fe(II)-[cytochrome c] + O2 + 8 H(+)(in) = 4 Fe(III)-[cytochrome c] + 2 H2O + 4 H(+)(out). Functionally, component of the cytochrome c oxidase, the last enzyme in the mitochondrial electron transport chain which drives oxidative phosphorylation. The respiratory chain contains 3 multisubunit complexes succinate dehydrogenase (complex II, CII), ubiquinol-cytochrome c oxidoreductase (cytochrome b-c1 complex, complex III, CIII) and cytochrome c oxidase (complex IV, CIV), that cooperate to transfer electrons derived from NADH and succinate to molecular oxygen, creating an electrochemical gradient over the inner membrane that drives transmembrane transport and the ATP synthase. Cytochrome c oxidase is the component of the respiratory chain that catalyzes the reduction of oxygen to water. Electrons originating from reduced cytochrome c in the intermembrane space (IMS) are transferred via the dinuclear copper A center (CU(A)) of subunit 2 and heme A of subunit 1 to the active site in subunit 1, a binuclear center (BNC) formed by heme A3 and copper B (CU(B)). The BNC reduces molecular oxygen to 2 water molecules using 4 electrons from cytochrome c in the IMS and 4 protons from the mitochondrial matrix. The protein is Cytochrome c oxidase subunit 3 (MT-CO3) of Bos mutus grunniens (Wild yak).